The chain runs to 79 residues: MSEFWHKLGCCVVEKPQPKKKRRRIDRTMIGEPMNFVHLTHIGSGEMGAGDGLAMTGAVQEQMRSKGNRDRPWSNSRGL.

S-palmitoyl cysteine attachment occurs at residues cysteine 10 and cysteine 11. Positions isoleucine 30–glycine 43 constitute a CRIB domain. Residues glycine 48–leucine 79 are disordered. Over residues methionine 63–proline 72 the composition is skewed to basic and acidic residues.

It belongs to the CDC42SE/SPEC family. Interacts with CDC42 (in GTP-bound form). Interacts weakly with RAC1 and not at all with RHOA.

The protein localises to the cytoplasm. The protein resides in the cytoskeleton. Its subcellular location is the cell membrane. Functionally, probably involved in the organization of the actin cytoskeleton by acting downstream of CDC42, inducing actin filament assembly. Alters CDC42-induced cell shape changes. In activated T-cells, may play a role in CDC42-mediated F-actin accumulation at the immunological synapse. May play a role in early contractile events in phagocytosis in macrophages. In Bos taurus (Bovine), this protein is CDC42 small effector protein 1 (CDC42SE1).